Reading from the N-terminus, the 450-residue chain is NADH-ubiquinone oxidoreductase chain 2 (450 aa).

13 consecutive transmembrane segments (helical) span residues 25–45 (GTIT…IVAM), 58–78 (LTPY…MLLM), 90–110 (SPFY…FPLV), 113–133 (LIAL…LTGL), 145–165 (LLYF…SYFV), 186–206 (AFDY…MAPL), 219–239 (TYIT…WIFA), 248–268 (VTIL…LFQV), 272–292 (TMLA…MMSY), 295–315 (AFYI…LGML), 344–364 (LAFS…TPGF), 385–405 (AIVV…KVLF), and 414–436 (NFIN…SFFM).

The protein belongs to the complex I subunit 2 family.

The protein resides in the mitochondrion inner membrane. It carries out the reaction a ubiquinone + NADH + 5 H(+)(in) = a ubiquinol + NAD(+) + 4 H(+)(out). Core subunit of the mitochondrial membrane respiratory chain NADH dehydrogenase (Complex I) that is believed to belong to the minimal assembly required for catalysis. Complex I functions in the transfer of electrons from NADH to the respiratory chain. The immediate electron acceptor for the enzyme is believed to be ubiquinone. This Debaryomyces hansenii (strain ATCC 36239 / CBS 767 / BCRC 21394 / JCM 1990 / NBRC 0083 / IGC 2968) (Yeast) protein is NADH-ubiquinone oxidoreductase chain 2 (ND2).